Reading from the N-terminus, the 238-residue chain is Histidine/lysine/arginine/ornithine transport system permease protein HisM (238 aa).

Over 1-26 (MIEILHEYWKPLLWTDGYRFTGVAIT) the chain is Periplasmic. Residues 23–221 (VAITLWLLIL…IISYVLISLF (199 aa)) form the ABC transmembrane type-1 domain. A helical transmembrane segment spans residues 27 to 47 (LWLLILSVVIGGVLALFLAIG). Residues 48–58 (RVSSNKYIQFP) are Cytoplasmic-facing. Residues 59–79 (IWLFTYIFRGTPLYVQLLVFY) form a helical membrane-spanning segment. The Periplasmic portion of the chain corresponds to 80 to 104 (SGMYTLEIVKGTEFLNAFFRSGLNC). A helical membrane pass occupies residues 105–125 (TVLALTLNTCAYTTEIFAGAI). Residues 126-157 (RSVPHGEIEAARAYGFSTFKMYRCIILPSALR) lie on the Cytoplasmic side of the membrane. Residues 158 to 178 (IALPAYSNEVILMLHSTALAF) traverse the membrane as a helical segment. Topologically, residues 179–199 (TATVPDLLKIARDINAATYQP) are periplasmic. Residues 200–220 (FTAFGIAAVLYLIISYVLISL) traverse the membrane as a helical segment. Over 221 to 238 (FRRAEKRWLQHVKPSSTH) the chain is Cytoplasmic.

Belongs to the binding-protein-dependent transport system permease family. HisMQ subfamily. As to quaternary structure, the HisPMQJ complex is composed of two ATP-binding proteins (HisP), two transmembrane proteins (HisM and HisQ) and a solute-binding protein (HisJ). The HisPMQ-ArgT complex is composed of two ATP-binding proteins (HisP), two transmembrane proteins (HisM and HisQ) and a solute-binding protein (ArgT).

It localises to the cell inner membrane. Part of the ABC transporter complex HisPMQJ involved in histidine transport. Is also part of the ABC transporter complex HisPMQ-ArgT involved in lysine/arginine/ornithine transport. Probably responsible for the translocation of the substrate across the membrane. This Escherichia coli O157:H7 protein is Histidine/lysine/arginine/ornithine transport system permease protein HisM (hisM).